An 887-amino-acid chain; its full sequence is Exosome complex component 10 (887 aa).

A compositionally biased stretch (basic and acidic residues) spans 1-10; it reads MAPPSPREHQ. The tract at residues 1 to 23 is disordered; that stretch reads MAPPSPREHQSAPATSATKPDAE. Lysine 19 is covalently cross-linked (Glycyl lysine isopeptide (Lys-Gly) (interchain with G-Cter in SUMO2)). The region spanning 289–455 is the 3'-5' exonuclease domain; that stretch reads HLVSSLDELV…YIYDRMRLEL (167 aa). Mg(2+) contacts are provided by aspartate 313, glutamate 315, aspartate 371, and aspartate 440. Residues 503-583 enclose the HRDC domain; that stretch reads NSQQLTAFQL…QQAREMPLLK (81 aa). Lysine 583 is covalently cross-linked (Glycyl lysine isopeptide (Lys-Gly) (interchain with G-Cter in SUMO1); alternate). Lysine 583 participates in a covalent cross-link: Glycyl lysine isopeptide (Lys-Gly) (interchain with G-Cter in SUMO2); alternate. Lysine 710 is covalently cross-linked (Glycyl lysine isopeptide (Lys-Gly) (interchain with G-Cter in SUMO2)). Disordered regions lie at residues 734–757 and 777–887; these read KEPK…AKEE and NATK…WPKR. Over residues 778 to 796 the composition is skewed to basic and acidic residues; it reads ATKKRERATSDLRTIEQKQ. Serine 823 is modified (phosphoserine). Glycyl lysine isopeptide (Lys-Gly) (interchain with G-Cter in SUMO2) cross-links involve residues lysine 835, lysine 861, and lysine 875.

Belongs to the exosome component 10/RRP6 family. Component of the RNA exosome complex. The catalytically inactive RNA exosome core complex (Exo-9) associates with the catalytic subunit EXOSC10/RRP6 (via its N-terminus). Exo-9 may associate with DIS3 to form the nucleolar exosome complex, or DIS3L to form the cytoplasmic exosome complex. The RNA exosome complex interacts with cofactors C1D/RRP47, MPHOSPH6/MPP6 and MTREX/MTR4. Interacts with MTREX; the interaction with MTREX mediates the association of MTREX with nuclear RNA exosomes. Part of the small subunit (SSU) processome, composed of more than 70 proteins and the RNA chaperone small nucleolar RNA (snoRNA) U3. Interacts with ALYREF/THOC4. Interacts with DHX36; this interaction occurs in a RNase-insensitive manner. Interacts with NRDE2. Interacts (via C-terminus) with USP36 (via C-terminus); the interaction is facilitated by the association with RNA and promotes sumoylation of EXOSC10. Mg(2+) is required as a cofactor. Sumoylated by USP36; sumoylation does not significantly affect EXOSC10 nucleolar localization and association with core exosome and USP36, but regulates the nucleolar RNA exosome activity in rRNA processing by promoting binding of EXOSC10 to pre-rRNAs. Effects of sumoylation on EXOSC10 levels vary between different studies. Sumoylation of EXOSC10 is required for the modulation of EXOSC10 effects on cellular protein translation and cell proliferation. Sumoylation is promoted by mild hypothermia. As to expression, expressed in ovary (at protein level). Expressed in testis (at protein level). Expressed in lung (at protein level).

The protein resides in the cytoplasm. It localises to the nucleus. The protein localises to the nucleolus. It is found in the nucleoplasm. In terms of biological role, catalytic component of the RNA exosome complex which has 3'-&gt;5' exoribonuclease activity and participates in a multitude of cellular RNA processing and degradation events. In the nucleus, the RNA exosome complex is involved in proper maturation of stable RNA species such as rRNA, snRNA and snoRNA, in the elimination of RNA processing by-products and non-coding 'pervasive' transcripts, such as antisense RNA species and promoter-upstream transcripts (PROMPTs), and of mRNAs with processing defects, thereby limiting or excluding their export to the cytoplasm. Part of the small subunit (SSU) processome, first precursor of the small eukaryotic ribosomal subunit. During the assembly of the SSU processome in the nucleolus, many ribosome biogenesis factors, an RNA chaperone and ribosomal proteins associate with the nascent pre-rRNA and work in concert to generate RNA folding, modifications, rearrangements and cleavage as well as targeted degradation of pre-ribosomal RNA by the RNA exosome. The RNA exosome may be involved in Ig class switch recombination (CSR) and/or Ig variable region somatic hypermutation (SHM) by targeting AICDA deamination activity to transcribed dsDNA substrates. In the cytoplasm, the RNA exosome complex is involved in general mRNA turnover and specifically degrades inherently unstable mRNAs containing AU-rich elements (AREs) within their 3' untranslated regions, and in RNA surveillance pathways, preventing translation of aberrant mRNAs. It seems to be involved in degradation of histone mRNA. EXOSC10 is required for nucleolar localization of C1D and probably mediates the association of MTREX, C1D and MPHOSPH6 with the RNA exosome involved in the maturation of 5.8S rRNA. Plays a role in the recruitment of replication protein A complex (RPA) and RAD51 to DNA double-strand breaks caused by irradiation, contributing to DNA repair by homologous recombination. Regulates levels of damage-induced RNAs in order to prevent DNA-RNA hybrid formation at DNA double-strand breaks and limit DNA end resection after damage. Plays a role in oocyte development, maturation and survival. Required for normal testis development and mitotic division of spermatogonia. Plays a role in proper embryo development. Required for global protein translation. Required for cell proliferation. In Mus musculus (Mouse), this protein is Exosome complex component 10 (Exosc10).